Here is a 690-residue protein sequence, read N- to C-terminus: UvrABC system protein C (690 aa).

Residues 1 to 60 (MTTDSSDPAKPAGPGQPPGSGADTRPGGLATGQDVDPATIETDEDDEARLPDVPDEPTDA) form a disordered region. Over residues 41–58 (ETDEDDEARLPDVPDEPT) the composition is skewed to acidic residues. In terms of domain architecture, GIY-YIG spans 82–160 (TSPGVYRMMN…IKQLRPRFNV (79 aa)). In terms of domain architecture, UVR spans 270 to 305 (RAVKEELAREMEKASGDLAFERAALYRDRLAALSAI).

Belongs to the UvrC family. In terms of assembly, interacts with UvrB in an incision complex.

The protein resides in the cytoplasm. The UvrABC repair system catalyzes the recognition and processing of DNA lesions. UvrC both incises the 5' and 3' sides of the lesion. The N-terminal half is responsible for the 3' incision and the C-terminal half is responsible for the 5' incision. This Nitrobacter hamburgensis (strain DSM 10229 / NCIMB 13809 / X14) protein is UvrABC system protein C.